Reading from the N-terminus, the 374-residue chain is UDP-N-acetylglucosamine--N-acetylmuramyl-(pentapeptide) pyrophosphoryl-undecaprenol N-acetylglucosamine transferase (374 aa).

Residues 13-15, Asn-124, Arg-165, Ser-193, and Gln-294 each bind UDP-N-acetyl-alpha-D-glucosamine; that span reads TGG.

Belongs to the glycosyltransferase 28 family. MurG subfamily.

The protein resides in the cell inner membrane. The enzyme catalyses di-trans,octa-cis-undecaprenyl diphospho-N-acetyl-alpha-D-muramoyl-L-alanyl-D-glutamyl-meso-2,6-diaminopimeloyl-D-alanyl-D-alanine + UDP-N-acetyl-alpha-D-glucosamine = di-trans,octa-cis-undecaprenyl diphospho-[N-acetyl-alpha-D-glucosaminyl-(1-&gt;4)]-N-acetyl-alpha-D-muramoyl-L-alanyl-D-glutamyl-meso-2,6-diaminopimeloyl-D-alanyl-D-alanine + UDP + H(+). It functions in the pathway cell wall biogenesis; peptidoglycan biosynthesis. Its function is as follows. Cell wall formation. Catalyzes the transfer of a GlcNAc subunit on undecaprenyl-pyrophosphoryl-MurNAc-pentapeptide (lipid intermediate I) to form undecaprenyl-pyrophosphoryl-MurNAc-(pentapeptide)GlcNAc (lipid intermediate II). The protein is UDP-N-acetylglucosamine--N-acetylmuramyl-(pentapeptide) pyrophosphoryl-undecaprenol N-acetylglucosamine transferase of Rhizobium rhizogenes (strain K84 / ATCC BAA-868) (Agrobacterium radiobacter).